We begin with the raw amino-acid sequence, 424 residues long: MVTCEAGIASVQQAIKDIADGNFVIVIDRESRENEGDLILAGEKVSAEKMAFLLSHTTGIVCASVTREQARVLDLPAMVQENQCAFKTAFTVSVDASSGITTGVSAADRTRTVQLLSDPTSISQSFVRPGHVFPLVSQPGGVVKRPGHTEASMDLMRLAGMYPCGIFAELVNADHSMMRQQQILDFAEQHGFTVITVDDLITYRWTFDSLVEHVSSARIPTKYGEFFIHVYKSIIDGTEHFALVKGDIREQESVPVRVHSECLTGDVLGSCRCDCGAQLDMAMRYIAEQGLGVIVYLRGQEGRGIGFGHKIQAYALQDLGYDTVEANLQLSFPIDAREYGVAAQILKDLRLTSVRLITHNPKKFFELQRLGIHILDRIVLPVIVSSENERYLRTKKDRMGHWLNFPVLNESEDEYETVERTSCC.

Residues 1-206 (MVTCEAGIAS…VDDLITYRWT (206 aa)) form a DHBP synthase region. Residues 32–33 (RE), aspartate 37, 145–149 (RPGHT), and glutamate 169 each bind D-ribulose 5-phosphate. Glutamate 33 lines the Mg(2+) pocket. Histidine 148 serves as a coordination point for Mg(2+). The tract at residues 207 to 424 (FDSLVEHVSS…YETVERTSCC (218 aa)) is GTP cyclohydrolase II. 257-261 (RVHSE) is a GTP binding site. Residues cysteine 262, cysteine 273, and cysteine 275 each contribute to the Zn(2+) site. GTP-binding positions include glutamine 278, 301-303 (EGR), and threonine 323. Aspartate 335 functions as the Proton acceptor; for GTP cyclohydrolase activity in the catalytic mechanism. The active-site Nucleophile; for GTP cyclohydrolase activity is the arginine 337. 2 residues coordinate GTP: threonine 358 and lysine 363.

In the N-terminal section; belongs to the DHBP synthase family. It in the C-terminal section; belongs to the GTP cyclohydrolase II family. Mg(2+) is required as a cofactor. Requires Mn(2+) as cofactor. Zn(2+) serves as cofactor.

It carries out the reaction D-ribulose 5-phosphate = (2S)-2-hydroxy-3-oxobutyl phosphate + formate + H(+). The enzyme catalyses GTP + 4 H2O = 2,5-diamino-6-hydroxy-4-(5-phosphoribosylamino)-pyrimidine + formate + 2 phosphate + 3 H(+). The protein operates within cofactor biosynthesis; riboflavin biosynthesis; 2-hydroxy-3-oxobutyl phosphate from D-ribulose 5-phosphate: step 1/1. It participates in cofactor biosynthesis; riboflavin biosynthesis; 5-amino-6-(D-ribitylamino)uracil from GTP: step 1/4. In terms of biological role, catalyzes the conversion of D-ribulose 5-phosphate to formate and 3,4-dihydroxy-2-butanone 4-phosphate. Functionally, catalyzes the conversion of GTP to 2,5-diamino-6-ribosylamino-4(3H)-pyrimidinone 5'-phosphate (DARP), formate and pyrophosphate. The sequence is that of Riboflavin biosynthesis protein RibBA from Chlamydia muridarum (strain MoPn / Nigg).